Consider the following 140-residue polypeptide: Transcription antitermination protein NusB (140 aa).

The protein belongs to the NusB family.

Involved in transcription antitermination. Required for transcription of ribosomal RNA (rRNA) genes. Binds specifically to the boxA antiterminator sequence of the ribosomal RNA (rrn) operons. The protein is Transcription antitermination protein NusB of Thermoanaerobacter pseudethanolicus (strain ATCC 33223 / 39E) (Clostridium thermohydrosulfuricum).